The chain runs to 241 residues: MRVVVSIGGSVLAPDLDPDRVAAYAEAIERLAADGCEVGVVVGGGGVAREYIETARELGANEVELDQLGIGTTRLNARLLIAALAGGANLSPATGYDEAAAALRRGEVSVMGGVTPGQTTDAVAAAFAESVDADLLVYATSANGVYDADPNVDDDATQFGSMSPAELVDIVLPMSRNAGASAPVDLLAAKLIDRAGIRSIVLDGTNPEVVVDAVLRGDHTGTDVIPTGSEEPIYWTGSSDA.

Residue 9–10 (GS) participates in ATP binding. G44 lines the UMP pocket. ATP is bound by residues G45 and R49. UMP contacts are provided by residues D66 and 114-120 (VTPGQTT). ATP-binding residues include T140, Y146, and D149. The tract at residues 222–241 (TDVIPTGSEEPIYWTGSSDA) is disordered.

Belongs to the UMP kinase family. As to quaternary structure, homohexamer.

It localises to the cytoplasm. The catalysed reaction is UMP + ATP = UDP + ADP. It functions in the pathway pyrimidine metabolism; CTP biosynthesis via de novo pathway; UDP from UMP (UMPK route): step 1/1. With respect to regulation, inhibited by UTP. Its function is as follows. Catalyzes the reversible phosphorylation of UMP to UDP. This Halorubrum lacusprofundi (strain ATCC 49239 / DSM 5036 / JCM 8891 / ACAM 34) protein is Uridylate kinase.